The primary structure comprises 392 residues: MWLANFFVSASTTMIVPFLSLYIETLSSFSNGFVQRWSGYVFGITFLMAFLVSPFWGRFGDKRGYKKILMATGTGIALSIFFMGFVTSVYQLFFLRMAMGLVTGFIPTSLAMISAQTPKSSAGKTLGTLQMGQVSGSLFGPLLGGMLADRFGFTYTFFITSFVIFSSVLLVLFGVKEKHLAEKTAKRTSYSRKEVLSYIFHHPALWVMMLLTMLIQTGNFSIQPLLALYVNELHGPVNLAFFSGMAFSATGLGSLLLARKWGDLGDRYGHRRILIGLLLAASFFFIPQALASSLSVLLVFRFLFGMAMGGLLPCITAAIRVQAPGSIQGEVLGYNVSFRFLGNVLGPLLGGIISSHFTISATFYVTAFLFFAGACMLWIMQKLRKDSYAKAS.

The next 10 helical transmembrane spans lie at W2 to I23, S38 to G60, G73 to L95, F153 to V175, V195 to T217, V237 to R259, R272 to A291, L297 to I319, V331 to I353, and F357 to I379.

The protein belongs to the major facilitator superfamily.

Its subcellular location is the cell membrane. This is an uncharacterized protein from Bacillus subtilis (strain 168).